The following is a 252-amino-acid chain: Probable phosphatase SO_1652 (252 aa).

Positions 8, 10, 16, 41, 74, 102, 132, 193, and 195 each coordinate Zn(2+).

This sequence belongs to the PHP family. The cofactor is Zn(2+).

This is Probable phosphatase SO_1652 from Shewanella oneidensis (strain ATCC 700550 / JCM 31522 / CIP 106686 / LMG 19005 / NCIMB 14063 / MR-1).